The sequence spans 106 residues: UPF0060 membrane protein RL1530 (106 aa).

Transmembrane regions (helical) follow at residues 4-24 (IIFA…WAWL), 30-50 (VWWL…LTLV), 58-78 (TFAA…WLVE), and 86-106 (DIGG…APRG).

Belongs to the UPF0060 family.

Its subcellular location is the cell inner membrane. This chain is UPF0060 membrane protein RL1530, found in Rhizobium johnstonii (strain DSM 114642 / LMG 32736 / 3841) (Rhizobium leguminosarum bv. viciae).